A 37-amino-acid polypeptide reads, in one-letter code: Large ribosomal subunit protein bL36 (37 aa).

The protein belongs to the bacterial ribosomal protein bL36 family.

This Marinobacter nauticus (strain ATCC 700491 / DSM 11845 / VT8) (Marinobacter aquaeolei) protein is Large ribosomal subunit protein bL36.